Here is a 263-residue protein sequence, read N- to C-terminus: Endonuclease 8 (263 aa).

The active-site Schiff-base intermediate with DNA is the proline 2. Glutamate 3 serves as the catalytic Proton donor. Lysine 53 acts as the Proton donor; for beta-elimination activity in catalysis. DNA contacts are provided by glutamine 70, arginine 125, and asparagine 169. The FPG-type zinc finger occupies 229-263 (KVFHRDGELCERCGGIIEKTTLSSRPFYWCPGCQH). Arginine 253 functions as the Proton donor; for delta-elimination activity in the catalytic mechanism.

The protein belongs to the FPG family. It depends on Zn(2+) as a cofactor.

It catalyses the reaction 2'-deoxyribonucleotide-(2'-deoxyribose 5'-phosphate)-2'-deoxyribonucleotide-DNA = a 3'-end 2'-deoxyribonucleotide-(2,3-dehydro-2,3-deoxyribose 5'-phosphate)-DNA + a 5'-end 5'-phospho-2'-deoxyribonucleoside-DNA + H(+). Involved in base excision repair of DNA damaged by oxidation or by mutagenic agents. Acts as a DNA glycosylase that recognizes and removes damaged bases. Has a preference for oxidized pyrimidines, such as thymine glycol, 5,6-dihydrouracil and 5,6-dihydrothymine. Has AP (apurinic/apyrimidinic) lyase activity and introduces nicks in the DNA strand. Cleaves the DNA backbone by beta-delta elimination to generate a single-strand break at the site of the removed base with both 3'- and 5'-phosphates. The sequence is that of Endonuclease 8 from Shigella dysenteriae serotype 1 (strain Sd197).